The primary structure comprises 252 residues: Segregation and condensation protein A (252 aa).

The disordered stretch occupies residues 117–136; the sequence is EREEERQNAFTKPPSDLSEF.

This sequence belongs to the ScpA family. Component of a cohesin-like complex composed of ScpA, ScpB and the Smc homodimer, in which ScpA and ScpB bind to the head domain of Smc. The presence of the three proteins is required for the association of the complex with DNA.

It is found in the cytoplasm. Participates in chromosomal partition during cell division. May act via the formation of a condensin-like complex containing Smc and ScpB that pull DNA away from mid-cell into both cell halves. The chain is Segregation and condensation protein A from Bacillus pumilus (strain SAFR-032).